Consider the following 122-residue polypeptide: Large ribosomal subunit protein uL14 (122 aa).

In terms of assembly, forms a cluster with proteins L3 and L19. In the 70S ribosome, L14 and L19 interact and together make contacts with the 16S rRNA in bridges B5 and B8. Part of the 50S ribosomal subunit.

Its function is as follows. Binds to 23S rRNA. Forms part of two intersubunit bridges in the 70S ribosome. The sequence is that of Large ribosomal subunit protein uL14 from Rhodopseudomonas palustris (strain ATCC BAA-98 / CGA009).